Here is a 341-residue protein sequence, read N- to C-terminus: Ketol-acid reductoisomerase (NADP(+)) (341 aa).

In terms of domain architecture, KARI N-terminal Rossmann spans 3 to 184 (LKVYYDKDCD…GGGRSGIIET (182 aa)). NADP(+) is bound by residues 26–29 (FGSQ), S54, and 84–87 (DELQ). The active site involves H109. G135 is an NADP(+) binding site. One can recognise a KARI C-terminal knotted domain in the interval 185-330 (TFKDETETDL…GRLRAMMPWI (146 aa)). Positions 193, 197, 229, and 233 each coordinate Mg(2+). S254 is a binding site for substrate.

This sequence belongs to the ketol-acid reductoisomerase family. Mg(2+) is required as a cofactor.

It carries out the reaction (2R)-2,3-dihydroxy-3-methylbutanoate + NADP(+) = (2S)-2-acetolactate + NADPH + H(+). The enzyme catalyses (2R,3R)-2,3-dihydroxy-3-methylpentanoate + NADP(+) = (S)-2-ethyl-2-hydroxy-3-oxobutanoate + NADPH + H(+). It participates in amino-acid biosynthesis; L-isoleucine biosynthesis; L-isoleucine from 2-oxobutanoate: step 2/4. It functions in the pathway amino-acid biosynthesis; L-valine biosynthesis; L-valine from pyruvate: step 2/4. Its function is as follows. Involved in the biosynthesis of branched-chain amino acids (BCAA). Catalyzes an alkyl-migration followed by a ketol-acid reduction of (S)-2-acetolactate (S2AL) to yield (R)-2,3-dihydroxy-isovalerate. In the isomerase reaction, S2AL is rearranged via a Mg-dependent methyl migration to produce 3-hydroxy-3-methyl-2-ketobutyrate (HMKB). In the reductase reaction, this 2-ketoacid undergoes a metal-dependent reduction by NADPH to yield (R)-2,3-dihydroxy-isovalerate. The sequence is that of Ketol-acid reductoisomerase (NADP(+)) from Helicobacter hepaticus (strain ATCC 51449 / 3B1).